A 571-amino-acid polypeptide reads, in one-letter code: MSFKMTQNQYTSLYGPTVGDSIRLGDTNLFAQIEKDYAVYGEEATFGGGKSIRDGMAQNPRVTRDDVNVADLVISNAVIIDYDKVVKADIGIKNGYIFAIGNAGNPDIMDNVDIIIGSTTDIIAAEGKIVTAGGIDTHVHFINPEQAEVALESGITTHIGGGTGASEGSKATTVTPGPWHIHRMLEAAEGLPINVGFTGKGQATNPTALIEQINAGAIGLKVHEDWGATPSALSHALDVADEFDVQIALHADTLNEAGFMEDTMAAVKDRVLHMYHTEGAGGGHAPDLIKSAAFPNILPSSTNPTLPYTHNTVDEHLDMVMITHHLNAAIPEDIAFADSRIRKETIAAEDVLQDMGVFSMISSDSQAMGRVGEVITRTWQVAHRMKEQRGPLDGDYVHNDNNRIKRYIAKYTINPAITHGISEYVGSIEPGKLADIVLWDPIFFGVKPELVVKGGLINSAVNGDANGSIPTSEPMKYRKMYGQYGGNLTSTSMTFVSKTAYENGINRALNLKRMVRPVKNIRQLSKADMKNNSATPKLDVDPQTYEVYVDGEKITSNAATELPLTQRYFLF.

Residues 133 to 571 form the Urease domain; the sequence is GGIDTHVHFI…LPLTQRYFLF (439 aa). Residues histidine 138, histidine 140, and lysine 221 each coordinate Ni(2+). At lysine 221 the chain carries N6-carboxylysine. Histidine 223 contributes to the substrate binding site. Residues histidine 250 and histidine 276 each contribute to the Ni(2+) site. Histidine 324 acts as the Proton donor in catalysis. Aspartate 364 is a binding site for Ni(2+).

This sequence belongs to the metallo-dependent hydrolases superfamily. Urease alpha subunit family. Heterotrimer of UreA (gamma), UreB (beta) and UreC (alpha) subunits. Three heterotrimers associate to form the active enzyme. Requires Ni cation as cofactor. Carboxylation allows a single lysine to coordinate two nickel ions.

The protein resides in the cytoplasm. The catalysed reaction is urea + 2 H2O + H(+) = hydrogencarbonate + 2 NH4(+). It participates in nitrogen metabolism; urea degradation; CO(2) and NH(3) from urea (urease route): step 1/1. This is Urease subunit alpha from Staphylococcus aureus (strain MRSA252).